Reading from the N-terminus, the 268-residue chain is Probable intron-encoded DNA endonuclease 1 (268 aa).

Belongs to the LAGLIDADG endonuclease family.

Its subcellular location is the mitochondrion. In terms of biological role, mitochondrial DNA endonuclease involved in intron homing. The chain is Probable intron-encoded DNA endonuclease 1 (hegI1) from Mycosarcoma maydis (Corn smut fungus).